Reading from the N-terminus, the 154-residue chain is Xanthine-guanine phosphoribosyltransferase (154 aa).

5-phospho-alpha-D-ribose 1-diphosphate is bound by residues 37–38, R69, and 88–96; these read RG and EDLVDSGDT. R69 is a binding site for GMP. Position 89 (D89) interacts with Mg(2+). Residues D92 and I135 each coordinate guanine. 2 residues coordinate xanthine: D92 and I135. GMP is bound by residues 92–96 and 134–135; these read DSGDT and WI.

This sequence belongs to the purine/pyrimidine phosphoribosyltransferase family. XGPT subfamily. Homotetramer. Mg(2+) is required as a cofactor.

The protein localises to the cell inner membrane. It catalyses the reaction GMP + diphosphate = guanine + 5-phospho-alpha-D-ribose 1-diphosphate. It carries out the reaction XMP + diphosphate = xanthine + 5-phospho-alpha-D-ribose 1-diphosphate. The enzyme catalyses IMP + diphosphate = hypoxanthine + 5-phospho-alpha-D-ribose 1-diphosphate. The protein operates within purine metabolism; GMP biosynthesis via salvage pathway; GMP from guanine: step 1/1. It functions in the pathway purine metabolism; XMP biosynthesis via salvage pathway; XMP from xanthine: step 1/1. In terms of biological role, purine salvage pathway enzyme that catalyzes the transfer of the ribosyl-5-phosphate group from 5-phospho-alpha-D-ribose 1-diphosphate (PRPP) to the N9 position of the 6-oxopurines guanine and xanthine to form the corresponding ribonucleotides GMP (guanosine 5'-monophosphate) and XMP (xanthosine 5'-monophosphate), with the release of PPi. To a lesser extent, also acts on hypoxanthine. This chain is Xanthine-guanine phosphoribosyltransferase, found in Vibrio atlanticus (strain LGP32) (Vibrio splendidus (strain Mel32)).